Consider the following 255-residue polypeptide: MTLTIKEVTQLINAVNTIEELENHECFLDERKGVQNAIARRRKALEKEQALKEKYVEMTYFENEILKEHPNAIICGIDEVGRGPLAGPVVACATILNSNHNYLGLDDSKKVPITKRLELNEALKNEVTAFAYGIATAEEIDEFNIYKATQIAMQRAIDGLSVQPTHLLIDAMTLDNALPQVSLIKGDARSVSIAAASIMAKVFRDDYMTQLSKDYPEYGFEKNAGYGTKQHLLAIDDIGIMKEHRKSFEPIKSLL.

In terms of domain architecture, RNase H type-2 spans 72 to 255; that stretch reads AIICGIDEVG…KSFEPIKSLL (184 aa). A divalent metal cation contacts are provided by Asp-78, Glu-79, and Asp-170.

The protein belongs to the RNase HII family. It depends on Mn(2+) as a cofactor. Mg(2+) serves as cofactor.

The protein resides in the cytoplasm. It carries out the reaction Endonucleolytic cleavage to 5'-phosphomonoester.. Endonuclease that specifically degrades the RNA of RNA-DNA hybrids. This Staphylococcus aureus (strain Mu3 / ATCC 700698) protein is Ribonuclease HII.